Consider the following 622-residue polypeptide: Low affinity potassium transport system protein Kup (622 aa).

12 helical membrane-spanning segments follow: residues 9 to 29 (LPAL…TSPL), 49 to 69 (VFGF…IKYI), 101 to 121 (VLVI…VITP), 137 to 157 (PQLD…LFVI), 163 to 183 (GMVG…LAVL), 213 to 233 (VSFI…ALYA), 247 to 267 (WFSV…ALLL), 276 to 296 (PFFL…ATLA), 337 to 357 (IYIP…IVSF), 363 to 383 (LAAA…ILSA), 395 to 415 (LFVG…FSAN), and 419 to 439 (IVSG…VMTT).

Belongs to the HAK/KUP transporter (TC 2.A.72) family.

It is found in the cell inner membrane. It catalyses the reaction K(+)(in) + H(+)(in) = K(+)(out) + H(+)(out). Its function is as follows. Responsible for the low-affinity transport of potassium into the cell. Likely operates as a K(+):H(+) symporter. This chain is Low affinity potassium transport system protein Kup, found in Klebsiella pneumoniae subsp. pneumoniae (strain ATCC 700721 / MGH 78578).